The sequence spans 379 residues: LIM/homeobox protein Lhx9 (379 aa).

LIM zinc-binding domains lie at 51-112 (TLCA…RFSV) and 113-175 (QRCA…LVQG). 2 disordered regions span residues 232–257 (ENDT…TSFK) and 310–379 (RQEN…TNLF). Over residues 248–257 (KTKRMRTSFK) the composition is skewed to basic residues. Positions 249–308 (TKRMRTSFKHHQLRTTKSYFAINHNPDAKDLKQLAQKTGLTKRVLQVWFQNARAKFRRNL) form a DNA-binding region, homeobox. Residues 326–379 (APASTDSAALTPTGAASTLSDLTSPSLNVGASVTPNMDSHESGSPSQTTLTNLF) are compositionally biased toward polar residues.

As to expression, isoform 1 and isoform 3 are expressed in ovary, testis, brain and heart. Isoform 4 and isoform 5 are expressed in brain.

The protein localises to the nucleus. Functionally, may be involved in gonadal development. The chain is LIM/homeobox protein Lhx9 (lhx9) from Glandirana rugosa (Japanese wrinkled frog).